Reading from the N-terminus, the 309-residue chain is Malate dehydrogenase (309 aa).

Residues 9–14 (GAGFVG) and Asp-33 contribute to the NAD(+) site. Substrate is bound by residues Arg-82 and Arg-88. Residues Asn-95 and 118–120 (VNN) contribute to the NAD(+) site. The substrate site is built by Asn-120 and Arg-151. His-175 acts as the Proton acceptor in catalysis.

It belongs to the LDH/MDH superfamily. MDH type 3 family.

It catalyses the reaction (S)-malate + NAD(+) = oxaloacetate + NADH + H(+). Catalyzes the reversible oxidation of malate to oxaloacetate. The chain is Malate dehydrogenase from Roseiflexus castenholzii (strain DSM 13941 / HLO8).